A 264-amino-acid polypeptide reads, in one-letter code: Major prion protein (264 aa).

Positions 1–24 are cleaved as a signal peptide; that stretch reads MVKRHIGSWILVLFVVMWSDVGLC. Positions 25–241 are interaction with GRB2, ERI3 and SYN1; the sequence is KKRPKPGGGW…ESQAYYQRGA (217 aa). Residues 27 to 119 form a disordered region; the sequence is RPKPGGGWNT…WNKPSKPKTN (93 aa). 6 repeat units span residues 54–62, 63–70, 71–78, 79–86, 87–94, and 95–103. The tract at residues 54–103 is 6 X 8 AA tandem repeats of P-H-G-G-G-W-G-Q; it reads SQGGGGWGQPHGGGWGQPHGGGWGQPHGGGWGQPHGGGWGQPHGGGGWGQ. Residues 55–105 show a composition bias toward gly residues; it reads QGGGGWGQPHGGGWGQPHGGGWGQPHGGGWGQPHGGGWGQPHGGGGWGQGG. The Cu(2+) site is built by histidine 72, glycine 73, glycine 74, histidine 80, glycine 81, glycine 82, histidine 88, glycine 89, glycine 90, histidine 96, glycine 98, and glycine 99. An intrachain disulfide couples cysteine 190 to cysteine 225. Residues asparagine 192 and asparagine 208 are each glycosylated (N-linked (GlcNAc...) asparagine). Alanine 241 carries GPI-anchor amidated alanine lipidation. Residues 242-264 constitute a propeptide, removed in mature form; the sequence is SVILFSSPPVILLISLLIFLIVG.

The protein belongs to the prion family. As to quaternary structure, monomer and homodimer. Has a tendency to aggregate into amyloid fibrils containing a cross-beta spine, formed by a steric zipper of superposed beta-strands. Soluble oligomers may represent an intermediate stage on the path to fibril formation. Copper binding may promote oligomerization. Interacts with GRB2, APP, ERI3/PRNPIP and SYN1. Mislocalized cytosolically exposed PrP interacts with MGRN1; this interaction alters MGRN1 subcellular location and causes lysosomal enlargement. Interacts with KIAA1191.

Its subcellular location is the cell membrane. The protein resides in the golgi apparatus. Its function is as follows. Its primary physiological function is unclear. Has cytoprotective activity against internal or environmental stresses. May play a role in neuronal development and synaptic plasticity. May be required for neuronal myelin sheath maintenance. May play a role in iron uptake and iron homeostasis. Soluble oligomers are toxic to cultured neuroblastoma cells and induce apoptosis (in vitro). Association with GPC1 (via its heparan sulfate chains) targets PRNP to lipid rafts. Also provides Cu(2+) or Zn(2+) for the ascorbate-mediated GPC1 deaminase degradation of its heparan sulfate side chains. The polypeptide is Major prion protein (PRNP) (Bubalus bubalis (Domestic water buffalo)).